Here is a 745-residue protein sequence, read N- to C-terminus: Probable endochitinase ARB_07371 (745 aa).

The N-terminal stretch at 1 to 23 (MALPKTIMAFIAFISFLVSTTFA) is a signal peptide. Residues 30–351 (TNVVTYWGQG…SNIKRLLLNN (322 aa)) form the GH18 domain. Glu178 functions as the Proton donor in the catalytic mechanism. 2 disordered regions span residues 351–372 (NDPSRPTTTSKTMSSTKTSMST) and 395–446 (WSMP…TTEI). The span at 357–372 (TTTSKTMSSTKTSMST) shows a compositional bias: low complexity. N-linked (GlcNAc...) asparagine glycosylation is found at Asn438 and Asn484. A disordered region spans residues 651–715 (SEPMTPTQVP…EMGGNGGDRT (65 aa)). A lipid anchor (GPI-anchor amidated glycine) is attached at Gly720. Positions 721 to 745 (GAGVVSPSFSVVVIVLGSIVYHIMQ) are cleaved as a propeptide — removed in mature form.

It belongs to the glycosyl hydrolase 18 family. Chitinase class III subfamily.

It is found in the cell membrane. The protein resides in the secreted. The protein localises to the cell wall. The enzyme catalyses Random endo-hydrolysis of N-acetyl-beta-D-glucosaminide (1-&gt;4)-beta-linkages in chitin and chitodextrins.. Functionally, GPI-anchored chitinase involved in the degradation of chitin, a component of the cell walls of fungi and exoskeletal elements of some animals (including worms and arthropods). Required to reshape the cell wall at the sites where cell wall remodeling and/or cell wall maturation actively take place such as sites of conidia formation. The polypeptide is Probable endochitinase ARB_07371 (Arthroderma benhamiae (strain ATCC MYA-4681 / CBS 112371) (Trichophyton mentagrophytes)).